A 301-amino-acid chain; its full sequence is t-SNARE affecting a late Golgi compartment protein 2 (301 aa).

The Cytoplasmic segment spans residues 1 to 279 (MAYRDRTGLY…SHQKNTGRLR (279 aa)). Residues 92 to 120 (SDKTEQENEIQRLTIQITQDFQRCQKLLQ) adopt a coiled-coil conformation. The region spanning 206–268 (DEQAIRHERA…KSAEKELIKA (63 aa)) is the t-SNARE coiled-coil homology domain. The helical; Anchor for type IV membrane protein transmembrane segment at 280-300 (FICFLILLIVALIVILAIKLL) threads the bilayer. A topological domain (vesicular) is located at residue arginine 301.

This sequence belongs to the syntaxin family.

The protein localises to the golgi apparatus. It localises to the trans-Golgi network membrane. Its subcellular location is the endosome membrane. Its function is as follows. t-SNARE that functions in transport from the endosome to the late Golgi and on the endocytic pathway. The protein is t-SNARE affecting a late Golgi compartment protein 2 (tlg2) of Schizosaccharomyces pombe (strain 972 / ATCC 24843) (Fission yeast).